Here is a 519-residue protein sequence, read N- to C-terminus: Chromobox protein homolog 2 (519 aa).

Positions 12-70 (FAAECILSKRLRKGKLEYLVKWRGWSSKHNSWEPEENILDPRLLLAFQKKEHEKEVQNR) constitute a Chromo domain. The segment covering 60–69 (KKEHEKEVQN) has biased composition (basic and acidic residues). Positions 60 to 180 (KKEHEKEVQN…PPEQKAARRP (121 aa)) are disordered. The segment covering 70–84 (RKRGKRPRGRPRKHT) has biased composition (basic residues). Positions 75 to 87 (RPRGRPRKHTVTS) form a DNA-binding region, a.T hook. Positions 103–119 (KSKSSSSSSSSTSSSSS) are enriched in low complexity. The span at 129–141 (LDSKRGPRGRETH) shows a compositional bias: basic and acidic residues. Residues lysine 147 and lysine 154 each participate in a glycyl lysine isopeptide (Lys-Gly) (interchain with G-Cter in SUMO2) cross-link. The Nuclear localization signal signature appears at 164–169 (KRGRKP). At arginine 248 the chain carries Asymmetric dimethylarginine; alternate. Arginine 248 carries the post-translational modification Omega-N-methylarginine; alternate. Disordered regions lie at residues 295–336 (QKGG…LAPT) and 367–464 (AIPA…TSLP). The residue at position 303 (serine 303) is a Phosphoserine. Composition is skewed to polar residues over residues 321–336 (QRGNHSGSPGAQLAPT) and 384–395 (TGANMTNAPTDN). Over residues 453–464 (SSDSDPDSTSLP) the composition is skewed to low complexity.

In terms of assembly, component of a PRC1-like complex. The composition of the PRC1 complex may differ between the PRC1 complex in pluripotent embryonic stem cells containing RNF2, CBX7 and PCGF2, and the PRC1 complex in differentiating cells containing RNF2, CBX2, CBX4 and BMI1. Interacts with RING1/RNF2. Interacts (via chromodomain) with histone H3K9Me3 and H3K27me3. May interact with H3C15 and H3C1. Expressed in embryoid bodies.

It localises to the nucleus speckle. The protein localises to the chromosome. In terms of biological role, component of a Polycomb group (PcG) multiprotein PRC1-like complex, a complex class required to maintain the transcriptionally repressive state of many genes, including Hox genes, throughout development. PcG PRC1 complex acts via chromatin remodeling and modification of histones; it mediates monoubiquitination of histone H2A 'Lys-119', rendering chromatin heritably changed in its expressibility. Binds to histone H3 trimethylated at 'Lys-9' (H3K9me3) or at 'Lys-27' (H3K27me3). Plays a role in the lineage differentiation of the germ layers in embryonic development. Involved in sexual development, acting as activator of NR5A1 expression. This chain is Chromobox protein homolog 2 (Cbx2), found in Mus musculus (Mouse).